A 345-amino-acid chain; its full sequence is Succinylglutamate desuccinylase (345 aa).

Residues His-64, Glu-67, and His-161 each contribute to the Zn(2+) site. Residue Glu-225 is part of the active site.

The protein belongs to the AspA/AstE family. Succinylglutamate desuccinylase subfamily. Zn(2+) is required as a cofactor.

It catalyses the reaction N-succinyl-L-glutamate + H2O = L-glutamate + succinate. The protein operates within amino-acid degradation; L-arginine degradation via AST pathway; L-glutamate and succinate from L-arginine: step 5/5. Transforms N(2)-succinylglutamate into succinate and glutamate. This is Succinylglutamate desuccinylase from Shewanella piezotolerans (strain WP3 / JCM 13877).